The chain runs to 780 residues: Nuclear cap-binding protein subunit 1 (780 aa).

Residues 1-25 (MSSYRGSTRPRKRTREGENYGFRPH) are disordered. Phosphoserine is present on Ser-29. The 216-residue stretch at 34–249 (AARIKKDITF…KQLILSREND (216 aa)) folds into the MIF4G domain. Positions 738 to 780 (ANEPVQENTSEEQEDTKMQPVDAVDEQPSENNQTAADATNEEK) are disordered.

Belongs to the NCBP1 family. Component of the nuclear cap-binding complex (CBC), a heterodimer composed of cbc1 and cbc2 that interacts with capped RNAs.

The protein localises to the cytoplasm. The protein resides in the perinuclear region. Its subcellular location is the nucleus. Its function is as follows. Component of the CBC complex, which binds cotranscriptionally to the 5'-cap of pre-mRNAs and is involved in maturation, export and degradation of nuclear mRNAs. In Schizosaccharomyces pombe (strain 972 / ATCC 24843) (Fission yeast), this protein is Nuclear cap-binding protein subunit 1 (cbc1).